The following is a 330-amino-acid chain: Peroxisomal membrane protein PEX13 (330 aa).

Positions 1–14 (MSAPPTNQPPPLPP) are enriched in pro residues. Residues 1-20 (MSAPPTNQPPPLPPRSFDNQ) are disordered. The helical transmembrane segment at 193–213 (ASVNWPAALFWVVAIGGPWLI) threads the bilayer. One can recognise an SH3 domain in the interval 235–300 (APHYTAQALF…PINYVRIVGK (66 aa)).

Belongs to the peroxin-13 family. As to quaternary structure, interacts with PEX14/prx-14; forming the PEX13-PEX14 docking complex.

The protein localises to the peroxisome membrane. In terms of biological role, component of the PEX13-PEX14 docking complex, a translocon channel that specifically mediates the import of peroxisomal cargo proteins bound to PEX5/prx-5 receptor. The PEX13-PEX14 docking complex forms a large import pore which can be opened to a diameter of about 9 nm. Mechanistically, PEX5/prx-5 receptor along with cargo proteins associates with the PEX14/prx-14 subunit of the PEX13-PEX14 docking complex in the cytosol, leading to the insertion of the receptor into the organelle membrane with the concomitant translocation of the cargo into the peroxisome matrix. This chain is Peroxisomal membrane protein PEX13 (prx-13), found in Caenorhabditis elegans.